A 446-amino-acid chain; its full sequence is Iroquois homeobox protein 5a (446 aa).

The homeobox DNA-binding region spans 117–173; it reads NATRDATATLKAWLNEHRKNPYPTKGEKIMLAIITKMTLTQVSTWFANARRRLKKEN. The interval 175–312 is disordered; that stretch reads MTWTPRNRSE…IHSPPSAPKP (138 aa). The span at 184-201 shows a compositional bias: acidic residues; sequence EDEEEDENIDLEKNDDDE. Composition is skewed to basic and acidic residues over residues 202–220 and 227–258; these read PNKP…DHKL and PCDR…RTDL. Polar residues-rich tracts occupy residues 264-274 and 293-303; these read KPTTSSPSVLQ and STGNSNVTSVI.

It belongs to the TALE/IRO homeobox family.

Its subcellular location is the nucleus. Functionally, transcription factor. Binds to consensus iroquois binding site (IBS) motifs 5'-ACANNTGT-3' or 5'-ACANNNTGT-3' in regulatory elements of target genes. Required, together with irx7, for hyoid joint formation; they act cell autonomously to repress expression of cartilage matrix genes, such as collagen col2a1a, within immature chondrocytes of the joint interzone. May compete with or modify Sox9a activity, thereby reducing Sox9a-mediated activation of col2a1a. Probably acts in the developing hyoid joint downstream of Bmp signaling. In concert with irx6a, plays a role in visual performance. The chain is Iroquois homeobox protein 5a (irx5a) from Danio rerio (Zebrafish).